The chain runs to 518 residues: Gypsy retrotransposon integrase-like protein 1 (518 aa).

The Integrase catalytic domain occupies 130–292; it reads QQHLPMVGNP…TPYFQMFNRN (163 aa). At Ser498 the chain carries Phosphoserine.

The chain is Gypsy retrotransposon integrase-like protein 1 (Gin1) from Mus musculus (Mouse).